The primary structure comprises 145 residues: 3-dehydroquinate dehydratase (145 aa).

Tyr23 functions as the Proton acceptor in the catalytic mechanism. 3 residues coordinate substrate: Asn74, His80, and Asp87. His100 acts as the Proton donor in catalysis. Substrate-binding positions include 101 to 102 (LS) and Arg111.

This sequence belongs to the type-II 3-dehydroquinase family. In terms of assembly, homododecamer.

It carries out the reaction 3-dehydroquinate = 3-dehydroshikimate + H2O. The protein operates within metabolic intermediate biosynthesis; chorismate biosynthesis; chorismate from D-erythrose 4-phosphate and phosphoenolpyruvate: step 3/7. Its function is as follows. Catalyzes a trans-dehydration via an enolate intermediate. The protein is 3-dehydroquinate dehydratase of Bacillus licheniformis (strain ATCC 14580 / DSM 13 / JCM 2505 / CCUG 7422 / NBRC 12200 / NCIMB 9375 / NCTC 10341 / NRRL NRS-1264 / Gibson 46).